Consider the following 570-residue polypeptide: Sulfite reductase [NADPH] hemoprotein beta-component (570 aa).

[4Fe-4S] cluster contacts are provided by Cys434, Cys440, Cys479, and Cys483. A siroheme-binding site is contributed by Cys483.

This sequence belongs to the nitrite and sulfite reductase 4Fe-4S domain family. As to quaternary structure, alpha(8)-beta(8). The alpha component is a flavoprotein, the beta component is a hemoprotein. Siroheme is required as a cofactor. Requires [4Fe-4S] cluster as cofactor.

It catalyses the reaction hydrogen sulfide + 3 NADP(+) + 3 H2O = sulfite + 3 NADPH + 4 H(+). The protein operates within sulfur metabolism; hydrogen sulfide biosynthesis; hydrogen sulfide from sulfite (NADPH route): step 1/1. Component of the sulfite reductase complex that catalyzes the 6-electron reduction of sulfite to sulfide. This is one of several activities required for the biosynthesis of L-cysteine from sulfate. The sequence is that of Sulfite reductase [NADPH] hemoprotein beta-component from Salmonella newport (strain SL254).